Here is a 510-residue protein sequence, read N- to C-terminus: Bifunctional purine biosynthesis protein PurH (510 aa).

The MGS-like domain occupies 1–143 (MTKRALISVS…KNHSGVLVLV (143 aa)).

Belongs to the PurH family.

It carries out the reaction (6R)-10-formyltetrahydrofolate + 5-amino-1-(5-phospho-beta-D-ribosyl)imidazole-4-carboxamide = 5-formamido-1-(5-phospho-D-ribosyl)imidazole-4-carboxamide + (6S)-5,6,7,8-tetrahydrofolate. The enzyme catalyses IMP + H2O = 5-formamido-1-(5-phospho-D-ribosyl)imidazole-4-carboxamide. It participates in purine metabolism; IMP biosynthesis via de novo pathway; 5-formamido-1-(5-phospho-D-ribosyl)imidazole-4-carboxamide from 5-amino-1-(5-phospho-D-ribosyl)imidazole-4-carboxamide (10-formyl THF route): step 1/1. The protein operates within purine metabolism; IMP biosynthesis via de novo pathway; IMP from 5-formamido-1-(5-phospho-D-ribosyl)imidazole-4-carboxamide: step 1/1. In Deinococcus deserti (strain DSM 17065 / CIP 109153 / LMG 22923 / VCD115), this protein is Bifunctional purine biosynthesis protein PurH.